The primary structure comprises 87 residues: MANTPQAKKRIRRNDRRAEINGARVSRIRTFVKKVEAALAAGDKTAATAALAAAQPELFRGVSKGVVHKNTASRKFSRLTKRIAALG.

It belongs to the bacterial ribosomal protein bS20 family.

Its function is as follows. Binds directly to 16S ribosomal RNA. This Rhizorhabdus wittichii (strain DSM 6014 / CCUG 31198 / JCM 15750 / NBRC 105917 / EY 4224 / RW1) (Sphingomonas wittichii) protein is Small ribosomal subunit protein bS20.